Reading from the N-terminus, the 213-residue chain is Probable aspartate aminotransferase (213 aa).

Residues Gly47, Trp133, and Asn183 each contribute to the L-aspartate site.

It belongs to the class-I pyridoxal-phosphate-dependent aminotransferase family. Homodimer. Pyridoxal 5'-phosphate is required as a cofactor.

It is found in the cytoplasm. The enzyme catalyses L-aspartate + 2-oxoglutarate = oxaloacetate + L-glutamate. The sequence is that of Probable aspartate aminotransferase (aspC) from Streptomyces griseus.